We begin with the raw amino-acid sequence, 229 residues long: Flagellar L-ring protein (229 aa).

A signal peptide spans 1–25 (MKQVRLLPSATVRAACAVAVAALAG). The N-palmitoyl cysteine moiety is linked to residue Cys-26. A lipid anchor (S-diacylglycerol cysteine) is attached at Cys-26.

It belongs to the FlgH family. In terms of assembly, the basal body constitutes a major portion of the flagellar organelle and consists of four rings (L,P,S, and M) mounted on a central rod.

It localises to the cell outer membrane. It is found in the bacterial flagellum basal body. Its function is as follows. Assembles around the rod to form the L-ring and probably protects the motor/basal body from shearing forces during rotation. This Burkholderia vietnamiensis (strain G4 / LMG 22486) (Burkholderia cepacia (strain R1808)) protein is Flagellar L-ring protein.